A 130-amino-acid chain; its full sequence is kinetoplast-associated protein 2-1 (130 aa).

A propeptide spanning residues Met-1 to Ala-10 is cleaved from the precursor. The interval Leu-89–Lys-130 is disordered. The segment covering Lys-92–Gln-105 has biased composition (basic and acidic residues). The segment covering Lys-106 to Lys-130 has biased composition (basic residues).

Belongs to the KAP family. Associates with the kinetoplast DNA network.

The protein resides in the mitochondrion matrix. It localises to the kinetoplast. Its function is as follows. Histone H1-like DNA-binding protein involved in the organization and segregation of kinetoplast DNA (kDNA). The mitochondrial DNA of kinetoplastid protozoa consists of about 5,000 minicircles and 20 to 30 maxicircles. These circular DNAs are held together by catenation into a highly organized compact disk structure referred to as a kinetoplast DNA (kDNA) network. Binds preferentially to a specific fragment of minicircle DNA and is able to compact kDNA networks through DNA charge neutralization and condensation. This Crithidia fasciculata protein is kinetoplast-associated protein 2-1 (KAP2-1).